The primary structure comprises 206 residues: Large ribosomal subunit protein bL25 (206 aa).

Belongs to the bacterial ribosomal protein bL25 family. CTC subfamily. In terms of assembly, part of the 50S ribosomal subunit; part of the 5S rRNA/L5/L18/L25 subcomplex. Contacts the 5S rRNA. Binds to the 5S rRNA independently of L5 and L18.

In terms of biological role, this is one of the proteins that binds to the 5S RNA in the ribosome where it forms part of the central protuberance. The polypeptide is Large ribosomal subunit protein bL25 (Bartonella henselae (strain ATCC 49882 / DSM 28221 / CCUG 30454 / Houston 1) (Rochalimaea henselae)).